Consider the following 261-residue polypeptide: Transcription antitermination protein NusB (261 aa).

Positions 168–261 are disordered; it reads ARVEDQPSDD…DLHKKDTTDD (94 aa). Polar residues predominate over residues 217 to 228; that stretch reads VDTTSGNASDPE. Residues 242 to 261 are compositionally biased toward basic and acidic residues; sequence PTSKDHELATDLHKKDTTDD.

Belongs to the NusB family.

Functionally, involved in transcription antitermination. Required for transcription of ribosomal RNA (rRNA) genes. Binds specifically to the boxA antiterminator sequence of the ribosomal RNA (rrn) operons. The sequence is that of Transcription antitermination protein NusB from Cutibacterium acnes (strain DSM 16379 / KPA171202) (Propionibacterium acnes).